The chain runs to 182 residues: MSGLLKYLFGCFILCLLLQGKTHMTSATISKPHETIDIEKQNMTGERNSTLAQQLSFPMEDPTNWNYAILALAFVVLFLAFLILAQNSRANRTRKMKALNGAGGRNETEADSTQKAMMQYVVEVDNLAETDQMLQSKPTYISLNQVAQTSSPKVLPKEGQILVEWKDGNIGFLYTDSKEDDV.

The N-terminal stretch at 1–20 is a signal peptide; that stretch reads MSGLLKYLFGCFILCLLLQG. Residues 21-64 lie on the Extracellular side of the membrane; sequence KTHMTSATISKPHETIDIEKQNMTGERNSTLAQQLSFPMEDPTN. N-linked (GlcNAc...) asparagine glycosylation is found at asparagine 42 and asparagine 48. Residues 65-85 traverse the membrane as a helical segment; that stretch reads WNYAILALAFVVLFLAFLILA. Topologically, residues 86–182 are cytoplasmic; the sequence is QNSRANRTRK…LYTDSKEDDV (97 aa).

The protein belongs to the OST-beta family. Interacts with slc51a. The Ost-alpha/Ost-beta complex is a heterodimer composed of alpha (slc51a) and beta (slc51b) subunit; may induce the transport of slc51a from the endoplasmic reticulum to the plasma membrane. Expressed in liver.

Its subcellular location is the cell membrane. In terms of biological role, essential component of the Ost-alpha/Ost-beta complex, a heterodimer that acts as the intestinal basolateral transporter responsible for bile acid export from enterocytes into portal blood. Efficiently transports the major species of bile acids. May modulate slc51a glycosylation, membrane trafficking and stability activities. Able to transport taurocholate, estrone sulfate, digoxin, and prostaglandin E(2), but not p-aminohippurate or S-dinitrophenyl glutathione. The sequence is that of Organic solute transporter subunit beta (slc51b) from Leucoraja erinaceus (Little skate).